We begin with the raw amino-acid sequence, 387 residues long: Erythronate-4-phosphate dehydrogenase (387 aa).

Residues S45 and T67 each coordinate substrate. Position 147 (D147) interacts with NAD(+). R208 is a catalytic residue. Residue D232 coordinates NAD(+). The active site involves E237. H254 serves as the catalytic Proton donor. NAD(+) is bound at residue G257. Substrate is bound at residue Y258.

The protein belongs to the D-isomer specific 2-hydroxyacid dehydrogenase family. PdxB subfamily. Homodimer.

The protein localises to the cytoplasm. The catalysed reaction is 4-phospho-D-erythronate + NAD(+) = (R)-3-hydroxy-2-oxo-4-phosphooxybutanoate + NADH + H(+). Its pathway is cofactor biosynthesis; pyridoxine 5'-phosphate biosynthesis; pyridoxine 5'-phosphate from D-erythrose 4-phosphate: step 2/5. In terms of biological role, catalyzes the oxidation of erythronate-4-phosphate to 3-hydroxy-2-oxo-4-phosphonooxybutanoate. This is Erythronate-4-phosphate dehydrogenase from Shewanella sediminis (strain HAW-EB3).